We begin with the raw amino-acid sequence, 184 residues long: Peptide deformylase 2 (184 aa).

Residues Cys110 and His153 each coordinate Fe cation. Glu154 is a catalytic residue. A Fe cation-binding site is contributed by His157.

It belongs to the polypeptide deformylase family. Requires Fe(2+) as cofactor.

It carries out the reaction N-terminal N-formyl-L-methionyl-[peptide] + H2O = N-terminal L-methionyl-[peptide] + formate. Functionally, removes the formyl group from the N-terminal Met of newly synthesized proteins. Requires at least a dipeptide for an efficient rate of reaction. N-terminal L-methionine is a prerequisite for activity but the enzyme has broad specificity at other positions. This is Peptide deformylase 2 from Geobacillus stearothermophilus (Bacillus stearothermophilus).